Here is a 423-residue protein sequence, read N- to C-terminus: Mannose-6-phosphate isomerase (423 aa).

Residue Ala2 is modified to N-acetylalanine. 2 positions are modified to phosphoserine: Ser102 and Ser108. Residues Gln110, His112, Glu137, and His276 each contribute to the Zn(2+) site. Arg295 is an active-site residue.

Belongs to the mannose-6-phosphate isomerase type 1 family. Zn(2+) is required as a cofactor.

The protein resides in the cytoplasm. It carries out the reaction D-mannose 6-phosphate = D-fructose 6-phosphate. It functions in the pathway nucleotide-sugar biosynthesis; GDP-alpha-D-mannose biosynthesis; alpha-D-mannose 1-phosphate from D-fructose 6-phosphate: step 1/2. Its function is as follows. Isomerase that catalyzes the interconversion of fructose-6-P and mannose-6-P and has a critical role in the supply of D-mannose derivatives required for many eukaryotic glycosylation reactions. The protein is Mannose-6-phosphate isomerase (MPI) of Bos taurus (Bovine).